The sequence spans 298 residues: tRNA(Met) cytidine acetate ligase (298 aa).

ATP is bound by residues 6–19 (IAEY…HIYQ), Gly-100, Asn-157, and Arg-182.

This sequence belongs to the TmcAL family.

Its subcellular location is the cytoplasm. The enzyme catalyses cytidine(34) in elongator tRNA(Met) + acetate + ATP = N(4)-acetylcytidine(34) in elongator tRNA(Met) + AMP + diphosphate. Catalyzes the formation of N(4)-acetylcytidine (ac(4)C) at the wobble position of elongator tRNA(Met), using acetate and ATP as substrates. First activates an acetate ion to form acetyladenylate (Ac-AMP) and then transfers the acetyl group to tRNA to form ac(4)C34. The chain is tRNA(Met) cytidine acetate ligase from Mycoplasmopsis pulmonis (strain UAB CTIP) (Mycoplasma pulmonis).